A 112-amino-acid polypeptide reads, in one-letter code: Photosystem II reaction center Psb28 protein (112 aa).

This sequence belongs to the Psb28 family. As to quaternary structure, part of the photosystem II complex.

The protein resides in the cellular thylakoid membrane. This Microcystis aeruginosa (strain NIES-843 / IAM M-2473) protein is Photosystem II reaction center Psb28 protein.